We begin with the raw amino-acid sequence, 158 residues long: Transcription elongation factor GreB (158 aa).

Residues 53–75 (KRRLREIDRRVRFLTKRLEVLQI) adopt a coiled-coil conformation.

The protein belongs to the GreA/GreB family. GreB subfamily.

Necessary for efficient RNA polymerase transcription elongation past template-encoded arresting sites. The arresting sites in DNA have the property of trapping a certain fraction of elongating RNA polymerases that pass through, resulting in locked ternary complexes. Cleavage of the nascent transcript by cleavage factors such as GreA or GreB allows the resumption of elongation from the new 3'terminus. GreB releases sequences of up to 9 nucleotides in length. This Pasteurella multocida (strain Pm70) protein is Transcription elongation factor GreB.